The sequence spans 161 residues: Transcription elongation factor GreB (161 aa).

This sequence belongs to the GreA/GreB family. GreB subfamily.

Functionally, necessary for efficient RNA polymerase transcription elongation past template-encoded arresting sites. The arresting sites in DNA have the property of trapping a certain fraction of elongating RNA polymerases that pass through, resulting in locked ternary complexes. Cleavage of the nascent transcript by cleavage factors such as GreA or GreB allows the resumption of elongation from the new 3'terminus. GreB releases sequences of up to 9 nucleotides in length. The protein is Transcription elongation factor GreB of Vibrio cholerae serotype O1 (strain ATCC 39315 / El Tor Inaba N16961).